Here is an 820-residue protein sequence, read N- to C-terminus: Potassium channel GORK (820 aa).

Residues 1–69 (MGRLRRRQEI…PKNRWYKAWE (69 aa)) lie on the Cytoplasmic side of the membrane. Residues 70 to 90 (MFILVWAIYSSLFTPMEFGFF) form a helical membrane-spanning segment. At 91–97 (RGLPERL) the chain is on the extracellular side. Residues 98–118 (FVLDIVGQIAFLVDIVLQFFV) traverse the membrane as a helical segment. At 119–141 (AYRDTQTYRTVYKPTRIAFRYLK) the chain is on the cytoplasmic side. The chain crosses the membrane as a helical span at residues 142 to 162 (SHFLMDFIGCFPWDLIYKASG). Residues 163–168 (KHELVR) are Extracellular-facing. A helical; Voltage-sensor transmembrane segment spans residues 169 to 189 (YLLWIRLFRVRKVVEFFQRLE). The Cytoplasmic portion of the chain corresponds to 190–203 (KDTRINYLFTRILK). The chain crosses the membrane as a helical span at residues 204–224 (LLFVEVYCTHTAACIFYYLAT). The Extracellular segment spans residues 225 to 259 (TLPPENEGYTWIGSLKLGDYSYENFREIDLWKRYT). An intramembrane region (pore-forming) is located at residues 260–279 (TALYFAIVTMATVGYGDIHA). The Extracellular segment spans residues 280 to 285 (VNLREM). The chain crosses the membrane as a helical span at residues 286 to 306 (IFVMIYVSFDMVLGAYLIGNI). Topologically, residues 307 to 820 (TALIVKGSNT…YMISDTTDQT (514 aa)) are cytoplasmic. A nucleoside 3',5'-cyclic phosphate is bound at residue 386 to 508 (LFKGCSTEFI…ILNNIMEEKE (123 aa)). 6 ANK repeats span residues 528–559 (EAELALKVNSAAFQGDFYQLKSLIRSGADPNK), 563–592 (DGRSPLHLAACRGYEDITLFLIQEGVDVNL), 596–625 (FGHTPLFEAVKAGQEGVIGLLVKEGASFNL), 627–656 (DSGNFLCTTVAKGDSDFLKRLLSSGMNPNS), 660–689 (DHRTPLHVAASEGLFLMAKMLVEAGASVIS), and 693–722 (WGNSPLDEARLCGNKKLIKLLEDVKNAQSS). Residues 740 to 820 (KCTVFPFHPQ…YMISDTTDQT (81 aa)) form the KHA domain.

The protein belongs to the potassium channel family. Plant (TC 1.A.1.4) subfamily. The potassium channel is probably composed of a homo- or heterotetrameric complex of pore-forming subunits. In terms of tissue distribution, expressed in guard cell-containing tissues, in root epidermal cells and in root hairs. Detected in vascular cells of the root and shoot.

It localises to the membrane. Major selective outward-rectifying potassium channel of the guard cell membrane. Involved in regulation of stomatal movements according to the water status. Assuming opened or closed conformations in response to the voltage difference across the membrane, the channel is activated by depolarization. Conductance of the channel is modulated in a potassium-dependent fashion. May interact with the cytoskeleton or with regulatory proteins. This Arabidopsis thaliana (Mouse-ear cress) protein is Potassium channel GORK (GORK).